We begin with the raw amino-acid sequence, 527 residues long: Bifunctional purine biosynthesis protein PurH (527 aa).

An MGS-like domain is found at 1 to 149 (MASDFLPVRR…KNFARVAVAT (149 aa)).

Belongs to the PurH family.

It catalyses the reaction (6R)-10-formyltetrahydrofolate + 5-amino-1-(5-phospho-beta-D-ribosyl)imidazole-4-carboxamide = 5-formamido-1-(5-phospho-D-ribosyl)imidazole-4-carboxamide + (6S)-5,6,7,8-tetrahydrofolate. It carries out the reaction IMP + H2O = 5-formamido-1-(5-phospho-D-ribosyl)imidazole-4-carboxamide. It participates in purine metabolism; IMP biosynthesis via de novo pathway; 5-formamido-1-(5-phospho-D-ribosyl)imidazole-4-carboxamide from 5-amino-1-(5-phospho-D-ribosyl)imidazole-4-carboxamide (10-formyl THF route): step 1/1. The protein operates within purine metabolism; IMP biosynthesis via de novo pathway; IMP from 5-formamido-1-(5-phospho-D-ribosyl)imidazole-4-carboxamide: step 1/1. This is Bifunctional purine biosynthesis protein PurH from Xanthomonas oryzae pv. oryzae (strain MAFF 311018).